The sequence spans 427 residues: Glutamyl-tRNA(Gln) amidotransferase subunit D (427 aa).

Basic and acidic residues predominate over residues 1–18; that stretch reads MTADPGDRVRVTHGDASH. Positions 1–20 are disordered; it reads MTADPGDRVRVTHGDASHEG. The Asparaginase/glutaminase domain maps to 80–413; the sequence is PTIALISTGG…DDPEAAMQES (334 aa). Active-site residues include Thr90, Thr166, Asp167, and Lys243.

It belongs to the asparaginase 1 family. GatD subfamily. In terms of assembly, heterodimer of GatD and GatE.

The enzyme catalyses L-glutamyl-tRNA(Gln) + L-glutamine + ATP + H2O = L-glutaminyl-tRNA(Gln) + L-glutamate + ADP + phosphate + H(+). Its function is as follows. Allows the formation of correctly charged Gln-tRNA(Gln) through the transamidation of misacylated Glu-tRNA(Gln) in organisms which lack glutaminyl-tRNA synthetase. The reaction takes place in the presence of glutamine and ATP through an activated gamma-phospho-Glu-tRNA(Gln). The GatDE system is specific for glutamate and does not act on aspartate. In Halobacterium salinarum (strain ATCC 29341 / DSM 671 / R1), this protein is Glutamyl-tRNA(Gln) amidotransferase subunit D.